Consider the following 201-residue polypeptide: MSRREGSLEDPQTDSSVSLLPHLEAKIRQTHSLAHLLTKYAEQLLQEYVQLQGDPFGLPSFSPPRLPVAGLSAPAPSHAGLPVHERLRLDAAALAALPPLLDAVCRRQAELNPRAPRLLRRLEDAARQARALGAAVEALLAALGAANRGPRAEPPAATASAASATGVFPAKVLGLRVCGLYREWLSRTEGDLGQLLPGGSA.

The protein belongs to the IL-6 superfamily. In terms of tissue distribution, highly expressed in heart, skeletal muscle, prostate and ovary. Lower levels in lung, kidney, pancreas, thymus, testis and small intestine. Little or no expression in brain, placenta, liver, spleen, colon or peripheral blood leukocytes.

It localises to the secreted. In terms of biological role, induces cardiac myocyte hypertrophy in vitro. Binds to and activates the ILST/gp130 receptor. In Homo sapiens (Human), this protein is Cardiotrophin-1 (CTF1).